Consider the following 293-residue polypeptide: Acetylglutamate kinase (293 aa).

Residues 71-72 (GG), Arg93, and Asn186 each bind substrate.

It belongs to the acetylglutamate kinase family. ArgB subfamily.

The protein localises to the cytoplasm. The catalysed reaction is N-acetyl-L-glutamate + ATP = N-acetyl-L-glutamyl 5-phosphate + ADP. Its pathway is amino-acid biosynthesis; L-arginine biosynthesis; N(2)-acetyl-L-ornithine from L-glutamate: step 2/4. In terms of biological role, catalyzes the ATP-dependent phosphorylation of N-acetyl-L-glutamate. The chain is Acetylglutamate kinase from Synechococcus sp. (strain WH7803).